The chain runs to 250 residues: 2,3-bisphosphoglycerate-dependent phosphoglycerate mutase (250 aa).

Residues 10 to 17 (RHGESQWN), 23 to 24 (TG), arginine 62, 89 to 92 (ERHY), lysine 100, 116 to 117 (RR), and 185 to 186 (GN) each bind substrate. Residue histidine 11 is the Tele-phosphohistidine intermediate of the active site. The active-site Proton donor/acceptor is the glutamate 89.

The protein belongs to the phosphoglycerate mutase family. BPG-dependent PGAM subfamily. Homodimer.

The catalysed reaction is (2R)-2-phosphoglycerate = (2R)-3-phosphoglycerate. It functions in the pathway carbohydrate degradation; glycolysis; pyruvate from D-glyceraldehyde 3-phosphate: step 3/5. Functionally, catalyzes the interconversion of 2-phosphoglycerate and 3-phosphoglycerate. The sequence is that of 2,3-bisphosphoglycerate-dependent phosphoglycerate mutase from Escherichia coli O139:H28 (strain E24377A / ETEC).